Here is a 330-residue protein sequence, read N- to C-terminus: tRNA U34 carboxymethyltransferase (330 aa).

Residues K91, W105, K110, G130, 152-154 (DPS), 181-182 (IE), M196, Y200, and R315 each bind carboxy-S-adenosyl-L-methionine.

It belongs to the class I-like SAM-binding methyltransferase superfamily. CmoB family. Homotetramer.

It catalyses the reaction carboxy-S-adenosyl-L-methionine + 5-hydroxyuridine(34) in tRNA = 5-carboxymethoxyuridine(34) in tRNA + S-adenosyl-L-homocysteine + H(+). In terms of biological role, catalyzes carboxymethyl transfer from carboxy-S-adenosyl-L-methionine (Cx-SAM) to 5-hydroxyuridine (ho5U) to form 5-carboxymethoxyuridine (cmo5U) at position 34 in tRNAs. This is tRNA U34 carboxymethyltransferase from Shewanella amazonensis (strain ATCC BAA-1098 / SB2B).